Consider the following 79-residue polypeptide: Moronecidin (79 aa).

The first 22 residues, 1–22, serve as a signal peptide directing secretion; the sequence is MKCATLSLVLSMVVLMAEPGDA. A Glycine amide modification is found at Gly44. The segment at 45-68 is disordered; it reads GKAEQDQQDQQYQQDQQDQQAQQY. The propeptide occupies 47 to 79; sequence AEQDQQDQQYQQDQQDQQAQQYQRFNRERAAFD. Residues 52 to 68 show a composition bias toward low complexity; sequence QDQQYQQDQQDQQAQQY.

As to expression, expressed in gill, skin, intestine, spleen, anterior kidney, and blood cells.

It is found in the secreted. Its function is as follows. Antimicrobial peptide with broad-spectrum activity against Gram-positive and Gram-negative bacteria as well as against a variety of fungi. Rapidly inactivates both channel catfish herpesvirus (ED(50)=4 uM) and frog virus 3 (ED(50)=13 uM) over a wide temperature range. Seems to disrupt the membranes by adopting an alpha helical conformation. This Morone chrysops (White bass) protein is Moronecidin.